The primary structure comprises 690 residues: Ras guanyl-releasing protein 3 (690 aa).

In terms of domain architecture, N-terminal Ras-GEF spans serine 3–serine 125. The region spanning glutamate 152–arginine 383 is the Ras-GEF domain. EF-hand domains are found at residues histidine 420 to leucine 455 and phenylalanine 458 to glutamine 484. Ca(2+) contacts are provided by aspartate 433, aspartate 435, aspartate 437, tyrosine 439, aspartate 444, aspartate 462, aspartate 464, aspartate 466, and glutamate 473. Residues isoleucine 494 to cysteine 544 form a Phorbol-ester/DAG-type zinc finger. A disordered region spans residues valine 667–glycine 690.

Belongs to the RASGRP family.

Its function is as follows. Guanine nucleotide exchange factor (GEF) for Ras and Rap1. This Homo sapiens (Human) protein is Ras guanyl-releasing protein 3 (RASGRP3).